The primary structure comprises 463 residues: Hydrolase pyiE (463 aa).

Ser-252 functions as the Nucleophile in the catalytic mechanism. Residues 350-373 (KSDGSRANGKKSHSPTDGGGVESD) form a disordered region.

It belongs to the AB hydrolase superfamily. FUS2 hydrolase family. As to quaternary structure, homodimer.

It functions in the pathway mycotoxin biosynthesis. In terms of biological role, hydrolyase; part of the gene cluster that mediates the biosynthesis of the mycotoxin pyrichalasin H, a tyrosine-derived cytochalasan that inhibits the growth of rice seedlings, but also inhibits lymphocyte capping and actin polymerization and alters cell morphology. Pyrichalasin H is indicated as the responsible agent for the genus-specific pathogenicity of M.grisea toward crabgrass. The first step in the pathway is catalyzed by the O-methyltransferase pyiA which methylates free tyrosine to generate the precursor O-methyltyrosine. The hybrid PKS-NRPS pyiS, assisted by the enoyl reductase pyiC, are responsible for fusion of the O-methyltyrosine precursor and the polyketide backbone. The polyketide synthase module (PKS) of pyiS is responsible for the synthesis of the polyketide backbone and the downstream nonribosomal peptide synthetase (NRPS) amidates the carboxyl end of the polyketide with the O-methyltyrosine precursor. As the NRPS A-domain demonstrates substrate tolerance, pyiS can also use phenylalanine, tyrosine and even para-chlorophenylalanine as amino acid precursor, which leads to the production of novel cytochalasans, including halogenated cytochalasans. Because pyiS lacks a designated enoylreductase (ER) domain, the required activity is provided the enoyl reductase pyiC. Reduction by the hydrolyase pyiE leads to 1,5-dihydropyrrolone, which is substrate for dehydration and intra-molecular Diels-Alder cyclization by the Diels-Alderase pyiF to yield the required isoindolone-fused macrocycle. The tailoring cytochrome P450 monooxygenases piyD and piyG catalyze the hydroxylation at C-18 and C-7, respectivily, whereas the short-chain dehydrogenase/reductase pyiH reduces the carbonyl at C-21 in preparation for the transfer of an acetyl group by the acetyltransferase pyiB. These 3 reactions whose order is not clear yet, lead to the production of O-methylpyrichalasin J, a deacetylated pyrichalasin H. Finally, pyiB to converts O-methylpyrichalasin J into the final product pyrichalasin H via acetylation of C-21. This is Hydrolase pyiE from Pyricularia grisea (Crabgrass-specific blast fungus).